The sequence spans 387 residues: G-protein coupled receptor homolog R33 (387 aa).

The Extracellular portion of the chain corresponds to 1 to 33; that stretch reads MDVLLGTEELEDELHQLHFNYTCVPSLGLSVAR. The N-linked (GlcNAc...) asparagine; by host glycan is linked to Asn20. A helical transmembrane segment spans residues 34–61; it reads DAETAVNFLIVLVGGPMNFLVLATQMLS. Over 62 to 71 the chain is Cytoplasmic; sequence NRSYSVSTPT. Residues 72–94 form a helical membrane-spanning segment; that stretch reads LYMTNLYLANLLTVATLPFLMLS. At 95 to 107 the chain is on the extracellular side; that stretch reads NRGLVGSSPEGCK. Residues 108 to 129 form a helical membrane-spanning segment; that stretch reads IAALAYYATCTAGFATLMLIAI. The Cytoplasmic segment spans residues 130-150; the sequence is NRYRVIHQRTRSGAGSKRQTY. A helical transmembrane segment spans residues 151–169; sequence AVLAVTWLASLMCASPAPL. Residues 170-204 lie on the Extracellular side of the membrane; it reads YATVMAHDSADALAFETCIIYFSYDQVKTVLATFK. Residues 205–224 traverse the membrane as a helical segment; sequence ILITMIWGITPVVMMSWFYV. Over 225-244 the chain is Cytoplasmic; the sequence is FFYRRLKLTSYRRRSQTLTF. The helical transmembrane segment at 245 to 268 threads the bilayer; it reads VTTLMLSFLVVQTPFVAIMSYDSY. The Extracellular portion of the chain corresponds to 269–285; the sequence is GVLNWPINCDTINKRDA. The chain crosses the membrane as a helical span at residues 286–309; that stretch reads VSMLARVVPNFHCLLNPVLYAFLG. At 310-387 the chain is on the cytoplasmic side; that stretch reads RDFNKRFILC…PPPPPPPPNC (78 aa). Residues 368–387 are disordered; it reads RLRALGRPPPPPPPPPPPNC. Pro residues predominate over residues 374-387; the sequence is RPPPPPPPPPPPNC.

It belongs to the G-protein coupled receptor 1 family.

The protein localises to the host cell membrane. Functionally, plays an important role in vivo, in particular in the dissemination to or replication in the salivary gland. This is G-protein coupled receptor homolog R33 from Rattus.